Here is a 309-residue protein sequence, read N- to C-terminus: MKKFIIGIAAAVLVSTAAHAETIGASMAVFDDKFGTLLRNGMEDYAKTLDGVDLQIEDALNDVAKQQSQIQNFIAAGVDAIIVQPVDTDATTVMSKLAADAGIPLVYVNREPVNIDTLPEKQAFVASNEVDSGTLQTREICKLLDGKGKAVVIMGELSNQAARMRTKDIHDVLATDQCKGIEIVQEQTANWQRTQGADLMTNWLSAGIEFDAVIANNDEMAIGAIQALKAAGRSMDSVVIGGIDATDDALAAMAAGELDVSVFQDAVGQGKGSIDAALKLSKGEAVERKIYIPFELVTKANLAEFQGKN.

Positions Met-1–Ala-20 are cleaved as a signal peptide.

This sequence belongs to the bacterial solute-binding protein 2 family.

The protein localises to the periplasm. In terms of biological role, involved in rhizopine (L-3-O-methyl-scyllo-inosamine) catabolism. Could be involved in its high affinity transport. This Rhizobium meliloti (Ensifer meliloti) protein is Putative rhizopine-binding protein (mocB).